The sequence spans 157 residues: Transcription elongation factor GreA (157 aa).

A coiled-coil region spans residues 1–75; the sequence is MSKEIILTQE…VETLINRAKV (75 aa).

It belongs to the GreA/GreB family.

In terms of biological role, necessary for efficient RNA polymerase transcription elongation past template-encoded arresting sites. The arresting sites in DNA have the property of trapping a certain fraction of elongating RNA polymerases that pass through, resulting in locked ternary complexes. Cleavage of the nascent transcript by cleavage factors such as GreA or GreB allows the resumption of elongation from the new 3'terminus. GreA releases sequences of 2 to 3 nucleotides. The sequence is that of Transcription elongation factor GreA from Mycoplasma mycoides subsp. mycoides SC (strain CCUG 32753 / NCTC 10114 / PG1).